The primary structure comprises 338 residues: tRNA methyltransferase 10 homolog A (338 aa).

2 disordered regions span residues 1–91 and 296–338; these read MSSE…DRKR and RVEG…SVPH. S22 bears the Phosphoserine mark. Positions 52–80 form a coiled coil; sequence KQWEEQRELRKQKRKEKRKRKQLERQCQP. Positions 61-73 are enriched in basic residues; it reads RKQKRKEKRKRKQ. The 192-residue stretch at 88–279 folds into the SAM-dependent MTase TRM10-type domain; it reads DRKRIRRDVV…TILPQRKGAV (192 aa). The span at 308–328 shows a compositional bias: basic and acidic residues; that stretch reads EENRHELDSTHEEEKQDKENS. Residues 329–338 show a composition bias toward polar residues; it reads TESTVNSVPH. At S335 the chain carries Phosphoserine.

This sequence belongs to the class IV-like SAM-binding methyltransferase superfamily. TRM10 family. As to quaternary structure, interacts with tRNA.

The protein localises to the nucleus. It is found in the nucleolus. The catalysed reaction is guanosine(9) in tRNA + S-adenosyl-L-methionine = N(1)-methylguanosine(9) in tRNA + S-adenosyl-L-homocysteine + H(+). S-adenosyl-L-methionine-dependent guanine N(1)-methyltransferase that catalyzes the formation of N(1)-methylguanine at position 9 (m1G9) in tRNAs. Probably not able to catalyze formation of N(1)-methyladenine at position 9 (m1A9) in tRNAs. This chain is tRNA methyltransferase 10 homolog A (TRMT10A), found in Bos taurus (Bovine).